The chain runs to 160 residues: Ribosomal RNA large subunit methyltransferase H (160 aa).

2 residues coordinate S-adenosyl-L-methionine: leucine 76 and glycine 108.

This sequence belongs to the RNA methyltransferase RlmH family. As to quaternary structure, homodimer.

The protein resides in the cytoplasm. It catalyses the reaction pseudouridine(1915) in 23S rRNA + S-adenosyl-L-methionine = N(3)-methylpseudouridine(1915) in 23S rRNA + S-adenosyl-L-homocysteine + H(+). Its function is as follows. Specifically methylates the pseudouridine at position 1915 (m3Psi1915) in 23S rRNA. This Rhodopseudomonas palustris (strain TIE-1) protein is Ribosomal RNA large subunit methyltransferase H.